We begin with the raw amino-acid sequence, 346 residues long: L-threonine dehydratase catabolic TdcB (346 aa).

Position 59-60 (59-60 (FT)) interacts with AMP. K64 carries the N6-(pyridoxal phosphate)lysine modification. Residues Q94, 125–126 (GY), and N321 each bind AMP.

It belongs to the serine/threonine dehydratase family. As to quaternary structure, in the native structure, TdcB is in a dimeric form, whereas in the TdcB-AMP complex, it exists in a tetrameric form (dimer of dimers). It depends on pyridoxal 5'-phosphate as a cofactor.

It catalyses the reaction L-threonine = 2-oxobutanoate + NH4(+). Its pathway is amino-acid degradation; L-threonine degradation via propanoate pathway; propanoate from L-threonine: step 1/4. Each protein molecule can bind up to four molecules of AMP, which act as an allosteric activator to the enzyme. Functionally, catalyzes the anaerobic formation of alpha-ketobutyrate and ammonia from threonine in a two-step reaction. The first step involved a dehydration of threonine and a production of enamine intermediates (aminocrotonate), which tautomerizes to its imine form (iminobutyrate). Both intermediates are unstable and short-lived. The second step is the nonenzymatic hydrolysis of the enamine/imine intermediates to form 2-ketobutyrate and free ammonia. In the low water environment of the cell, the second step is accelerated by RidA. This chain is L-threonine dehydratase catabolic TdcB (tdcB), found in Staphylococcus aureus (strain USA300).